The sequence spans 437 residues: GTPase Der (437 aa).

EngA-type G domains are found at residues 4 to 167 (PVVA…PDEA) and 176 to 352 (IRFS…DNHR). GTP-binding positions include 10-17 (GRPNVGKS), 57-61 (DTGGI), 119-122 (NKVD), 182-189 (GRPNVGKS), 230-234 (DTAGM), and 295-298 (NKWD). Positions 353–437 (KRISSSTLND…PIKLIVRARK (85 aa)) constitute a KH-like domain.

It belongs to the TRAFAC class TrmE-Era-EngA-EngB-Septin-like GTPase superfamily. EngA (Der) GTPase family. In terms of assembly, associates with the 50S ribosomal subunit.

Functionally, GTPase that plays an essential role in the late steps of ribosome biogenesis. This is GTPase Der from Leuconostoc citreum (strain KM20).